The chain runs to 253 residues: Putative glutamine amidotransferase PB2B2.05 (253 aa).

The Glutamine amidotransferase type-1 domain maps to 5–228; that stretch reads IIALSVGFSN…INRSKWHMKQ (224 aa). Cys-100 (nucleophile) is an active-site residue. Catalysis depends on residues His-200 and Glu-202.

It is found in the cytoplasm. The protein localises to the nucleus. This chain is Putative glutamine amidotransferase PB2B2.05, found in Schizosaccharomyces pombe (strain 972 / ATCC 24843) (Fission yeast).